The primary structure comprises 106 residues: Large ribosomal subunit protein uL24 (106 aa).

Belongs to the universal ribosomal protein uL24 family. In terms of assembly, part of the 50S ribosomal subunit.

One of two assembly initiator proteins, it binds directly to the 5'-end of the 23S rRNA, where it nucleates assembly of the 50S subunit. Functionally, one of the proteins that surrounds the polypeptide exit tunnel on the outside of the subunit. The chain is Large ribosomal subunit protein uL24 from Acidiphilium cryptum (strain JF-5).